The primary structure comprises 524 residues: Methyl-CpG-binding domain-containing protein 8 (524 aa).

Positions 45 to 60 (CSSLSPSSSASLAASA) are enriched in low complexity. Residues 45-151 (CSSLSPSSSA…EEELEDNEGQ (107 aa)) form a disordered region. The span at 75–84 (FNESAGSRKQ) shows a compositional bias: polar residues. Residues 106–116 (RQRDDSSREEQ) are compositionally biased toward basic and acidic residues. Acidic residues predominate over residues 136–149 (EEEDEGEEELEDNE). Residues 334–406 (VVNACDYGGY…QHYYLQSDNK (73 aa)) form the MBD domain.

In terms of tissue distribution, expressed in shoot meristems, roots (vasculature and tips), hypocotyls (vasculature), cotyledons (vasculature and hydathodes), young leaves, buds, flowers and stems. Detected in stomata.

It is found in the nucleus. Probable transcriptional regulator. May regulates developmental traits such as flowering time. The sequence is that of Methyl-CpG-binding domain-containing protein 8 (MBD8) from Arabidopsis thaliana (Mouse-ear cress).